The following is a 360-amino-acid chain: Phosphate acyltransferase (360 aa).

It belongs to the PlsX family. As to quaternary structure, homodimer. Probably interacts with PlsY.

The protein localises to the cytoplasm. The enzyme catalyses a fatty acyl-[ACP] + phosphate = an acyl phosphate + holo-[ACP]. The protein operates within lipid metabolism; phospholipid metabolism. In terms of biological role, catalyzes the reversible formation of acyl-phosphate (acyl-PO(4)) from acyl-[acyl-carrier-protein] (acyl-ACP). This enzyme utilizes acyl-ACP as fatty acyl donor, but not acyl-CoA. The polypeptide is Phosphate acyltransferase (Thermobifida fusca (strain YX)).